Reading from the N-terminus, the 285-residue chain is Pantothenate synthetase (285 aa).

ATP is bound at residue 33 to 40; the sequence is MGALHEGH. His40 acts as the Proton donor in catalysis. Residue Gln64 coordinates (R)-pantoate. Residue Gln64 participates in beta-alanine binding. Position 150 to 153 (150 to 153) interacts with ATP; that stretch reads GEKD. Gln156 contacts (R)-pantoate. ATP contacts are provided by residues Ala179 and 187–190; that span reads LSSR.

It belongs to the pantothenate synthetase family. In terms of assembly, homodimer.

The protein resides in the cytoplasm. The catalysed reaction is (R)-pantoate + beta-alanine + ATP = (R)-pantothenate + AMP + diphosphate + H(+). Its pathway is cofactor biosynthesis; (R)-pantothenate biosynthesis; (R)-pantothenate from (R)-pantoate and beta-alanine: step 1/1. In terms of biological role, catalyzes the condensation of pantoate with beta-alanine in an ATP-dependent reaction via a pantoyl-adenylate intermediate. The sequence is that of Pantothenate synthetase from Caulobacter vibrioides (strain ATCC 19089 / CIP 103742 / CB 15) (Caulobacter crescentus).